The primary structure comprises 437 residues: Transcription factor 12 (437 aa).

Disordered regions lie at residues 1–68 (EFHD…QTGD), 80–123 (PDHT…YENS), and 244–335 (ASNT…ERRM). The segment covering 13–37 (VSPTDISTSLPPMSSFHRGSTSSSP) has biased composition (polar residues). T44 is subject to Phosphothreonine. S64 is subject to Phosphoserine. Over residues 83–94 (TSSSFPSNPSTP) the composition is skewed to low complexity. Composition is skewed to polar residues over residues 95–107 (VGSP…TSQW) and 114–123 (APSSPSYENS). Composition is skewed to basic and acidic residues over residues 273-285 (IKTE…ENLH) and 291-306 (DDMK…DIKV). Residue K274 forms a Glycyl lysine isopeptide (Lys-Gly) (interchain with G-Cter in SUMO2) linkage. At S295 the chain carries Phosphoserine. A Glycyl lysine isopeptide (Lys-Gly) (interchain with G-Cter in SUMO2) cross-link involves residue K305. T312 carries the phosphothreonine modification. Phosphoserine is present on residues S313 and S314. Over residues 323-335 (PEQKIEREKERRM) the composition is skewed to basic and acidic residues. The region spanning 332 to 385 (ERRMANNARERLRVRDINEAFKELGRMCQLHLKSEKPQTKLLILHQAVAVILSL) is the bHLH domain. Residues K364 and K408 each participate in a glycyl lysine isopeptide (Lys-Gly) (interchain with G-Cter in SUMO2) cross-link. A class A specific domain region spans residues 387 to 410 (QQVRERNLNPKAACLKRREEEKVS). Residues 405-437 (EEEKVSAASAEPPTTLPGTHPGLSETTNPMGHL) are disordered. Low complexity predominate over residues 416–427 (PPTTLPGTHPGL). Over residues 428-437 (SETTNPMGHL) the composition is skewed to polar residues.

In terms of assembly, efficient DNA binding requires dimerization with another bHLH protein. Forms homo- or heterooligomers with myogenin, E12 and ITF2 proteins. Interacts with NEUROD2. Interacts with PTF1A. Interacts with RUNX1T1. Interacts with BHLHA9.

Its subcellular location is the nucleus. Functionally, transcriptional regulator. Involved in the initiation of neuronal differentiation. Activates transcription by binding to the E box (5'-CANNTG-3'). Participates in the control of inducible RP4 gene expression in salivary cells. Binds to the RIPE3 element of the insulin II promoter. May be involved in the functional network that regulates the development of the GnRH axis. In Mesocricetus auratus (Golden hamster), this protein is Transcription factor 12 (TCF12).